A 696-amino-acid chain; its full sequence is Elongation factor G (696 aa).

The region spanning 8-290 is the tr-type G domain; the sequence is ERYRNIGIMA…AVLDYLPSPL (283 aa). Residues 17 to 24, 88 to 92, and 142 to 145 each bind GTP; these read AHIDAGKT, DTPGH, and NKMD.

This sequence belongs to the TRAFAC class translation factor GTPase superfamily. Classic translation factor GTPase family. EF-G/EF-2 subfamily.

It localises to the cytoplasm. In terms of biological role, catalyzes the GTP-dependent ribosomal translocation step during translation elongation. During this step, the ribosome changes from the pre-translocational (PRE) to the post-translocational (POST) state as the newly formed A-site-bound peptidyl-tRNA and P-site-bound deacylated tRNA move to the P and E sites, respectively. Catalyzes the coordinated movement of the two tRNA molecules, the mRNA and conformational changes in the ribosome. This is Elongation factor G from Nitrosomonas europaea (strain ATCC 19718 / CIP 103999 / KCTC 2705 / NBRC 14298).